A 465-amino-acid polypeptide reads, in one-letter code: Putative multidrug resistance protein MdtD (465 aa).

Helical transmembrane passes span 12–32 (LWIVAFGFFMQTLDTTIVNTA), 49–69 (SVIVSYVLTVAVMLPASGWLA), 72–92 (IGVKWVFFSAIILFTFGSLMC), 102–124 (ILSRVLQGVGGAMMVPVGRLTVM), 138–158 (FVTLPGQIGPLVGPALGGFLV), 165–185 (WIFLINLPVGVIGALATLLLM), 195–215 (FDISGFIMLAIGMATLTLALD), 219–239 (GLGLSPLAIAGLILCGVIALG), 267–287 (LVGSMSARIGSGMLPFMTPIF), 290–310 (IGLGFSPFHAGLMMIPMIIGS), 342–362 (LSLPLVAIMGWTLLMPVVLFF), 393–413 (LLSMAMQLSMSIGVSTAGILL), and 430–450 (SAFLYSYLCMAIIIALPALIF).

This sequence belongs to the major facilitator superfamily. TCR/Tet family.

It localises to the cell inner membrane. This Yersinia pseudotuberculosis serotype O:1b (strain IP 31758) protein is Putative multidrug resistance protein MdtD.